Consider the following 677-residue polypeptide: Probable sulfate transporter 4.2 (677 aa).

The Cytoplasmic portion of the chain corresponds to 1–83 (MSLAVKDLST…RTYRWHQYFK (83 aa)). The chain crosses the membrane as a helical span at residues 84-104 (LDLMAGITVGIMLVPQAMSYA). Topologically, residues 105–108 (RLAG) are extracellular. Residues 109–129 (LQPIYGLYSSFVPVFVYAVFG) traverse the membrane as a helical segment. Over 130-133 (SSRQ) the chain is Cytoplasmic. The chain crosses the membrane as a helical span at residues 134–154 (LAVGPVALVSLLVSNALSGIV). Topologically, residues 155 to 161 (DPSEELY) are extracellular. Residues 162-182 (TELAILLALMVGIFESIMGFL) traverse the membrane as a helical segment. The Cytoplasmic segment spans residues 183–189 (RLGWLIR). A helical transmembrane segment spans residues 190–210 (FISHSVISGFTTASAVVIGLS). At 211–241 (QLKYFLGYSVSRSSKIMPVIDSIIAGADQFK) the chain is on the extracellular side. Residues 242-262 (WPPFLLGCTILVILLVMKHVG) traverse the membrane as a helical segment. At 263-269 (KAKKELR) the chain is on the cytoplasmic side. Residues 270 to 290 (FIRAAGPLTGLALGTIIAKVF) traverse the membrane as a helical segment. At 291 to 318 (HPPSITLVGDIPQGLPKFSFPKSFDHAK) the chain is on the extracellular side. Residues 319–339 (LLLPTSALITGVAILESVGIA) form a helical membrane-spanning segment. Residues 340–355 (KALAAKNRYELDSNSE) lie on the Cytoplasmic side of the membrane. A helical transmembrane segment spans residues 356 to 376 (LFGLGVANIFGSLFSAYPTTG). At 377–392 (SFSRSAVNSESEAKTG) the chain is on the extracellular side. A helical membrane pass occupies residues 393-413 (LSGLVTGIIIGCSLLFLTPMF). At 414-420 (KFIPQCA) the chain is on the cytoplasmic side. A helical transmembrane segment spans residues 421–441 (LAAIVISAVSGLVDYEGAIFL). Topologically, residues 442-459 (WRVDKRDFTLWTITSTTT) are extracellular. A helical transmembrane segment spans residues 460–480 (LFFGIEIGVLIGVGFSLAFVI). Residues 481 to 677 (HESANPHIAV…LEEPLLSREK (197 aa)) lie on the Cytoplasmic side of the membrane. The 125-residue stretch at 505–629 (QYPEAYTYNG…VRVHDAVQVC (125 aa)) folds into the STAS domain.

The protein belongs to the SLC26A/SulP transporter (TC 2.A.53) family.

It is found in the membrane. In terms of biological role, h(+)/sulfate cotransporter that may play a role in the regulation of sulfate assimilation. This Arabidopsis thaliana (Mouse-ear cress) protein is Probable sulfate transporter 4.2 (SULTR4;2).